The chain runs to 162 residues: Phosphopantetheine adenylyltransferase (162 aa).

Thr10 contacts substrate. ATP contacts are provided by residues 10–11 (TF) and His18. Residues Lys42, Leu74, and Arg88 each contribute to the substrate site. Residues 89 to 91 (GLR), Glu99, and 124 to 130 (FSCISST) contribute to the ATP site.

It belongs to the bacterial CoaD family. In terms of assembly, homohexamer. It depends on Mg(2+) as a cofactor.

The protein localises to the cytoplasm. The catalysed reaction is (R)-4'-phosphopantetheine + ATP + H(+) = 3'-dephospho-CoA + diphosphate. Its pathway is cofactor biosynthesis; coenzyme A biosynthesis; CoA from (R)-pantothenate: step 4/5. Reversibly transfers an adenylyl group from ATP to 4'-phosphopantetheine, yielding dephospho-CoA (dPCoA) and pyrophosphate. The sequence is that of Phosphopantetheine adenylyltransferase from Francisella tularensis subsp. novicida (strain U112).